The sequence spans 192 residues: CASP-like protein 1E1 (192 aa).

The disordered stretch occupies residues 1–22 (MDSQNKNSVDAMDGIESRGMKE). Residues 1-29 (MDSQNKNSVDAMDGIESRGMKERGGRTNS) lie on the Cytoplasmic side of the membrane. Residues 30–50 (FLVLRVLAFVLTSTAAIVHGV) form a helical membrane-spanning segment. The Extracellular segment spans residues 51 to 81 (NNQTETVPIQLTSSMPPLYVPVVAKWHYLSA). N-linked (GlcNAc...) asparagine glycosylation is present at Asn52. A helical transmembrane segment spans residues 82-102 (FVFFVVSNAIACSYAAISVML). At 103-118 (SFCGKKSMVPIILTLD) the chain is on the cytoplasmic side. A helical membrane pass occupies residues 119-139 (LLMVALLFSSNGAATAIGVMG). The Extracellular portion of the chain corresponds to 140–161 (YKGNSHVKWNKVCNVFGKFCNQ). A helical membrane pass occupies residues 162-182 (VAASVVLSLIGSIVFVLLVML). The Cytoplasmic segment spans residues 183-192 (TAFRLHNKSK).

This sequence belongs to the Casparian strip membrane proteins (CASP) family. In terms of assembly, homodimer and heterodimers.

The protein resides in the cell membrane. This chain is CASP-like protein 1E1, found in Ricinus communis (Castor bean).